A 387-amino-acid chain; its full sequence is Protein salvador homolog 1 (387 aa).

A phosphoserine mark is found at Ser-95 and Ser-138. 2 consecutive WW domains span residues 201-234 (LPLPPGWSVDWTMRGRKYYIDHNTNTTHWSHPLE) and 236-269 (EGLPPGWERVESSEFGTYYVDHTNKRAQYRHPCA). The residue at position 212 (Thr-212) is a Phosphothreonine. An SARAH domain is found at 323-370 (ILKWELFQLADLDTYQGMLKLLFMKELEQIVKLYEAYRQALVTELENR).

As to quaternary structure, homodimer. Stabilized through interaction with STK3/MST2 or STK4/MST1. Interacts (via SARAH domain) with isoform 1 of NEK2. Interacts with ESR1 only in the presence of STK3/MST2. Interacts with WTIP and AJUBA. Post-translationally, phosphorylated by STK3/MST2 and STK4/MST1. Phosphorylation is not required for SAV1 stability and may increase the number of protein binding sites on the scaffold molecule.

Its subcellular location is the nucleus. It is found in the cytoplasm. In terms of biological role, regulator of STK3/MST2 and STK4/MST1 in the Hippo signaling pathway which plays a pivotal role in organ size control and tumor suppression by restricting proliferation and promoting apoptosis. The core of this pathway is composed of a kinase cascade wherein STK3/MST2 and STK4/MST1, in complex with its regulatory protein SAV1, phosphorylates and activates LATS1/2 in complex with its regulatory protein MOB1, which in turn phosphorylates and inactivates YAP1 oncoprotein and WWTR1/TAZ. Phosphorylation of YAP1 by LATS1/2 inhibits its translocation into the nucleus to regulate cellular genes important for cell proliferation, cell death, and cell migration. SAV1 is required for STK3/MST2 and STK4/MST1 activation and promotes cell-cycle exit and terminal differentiation in developing epithelial tissues. Plays a role in centrosome disjunction by regulating the localization of NEK2 to centrosomes, and its ability to phosphorylate CROCC and CEP250. In conjunction with STK3/MST2, activates the transcriptional activity of ESR1 through the modulation of its phosphorylation. The protein is Protein salvador homolog 1 of Rattus norvegicus (Rat).